The primary structure comprises 289 residues: 2-hydroxy-6-oxononadienedioate/2-hydroxy-6-oxononatrienedioate hydrolase (289 aa).

The 237-residue stretch at Thr39–His275 folds into the AB hydrolase-1 domain. The active-site Proton acceptor is His269.

The protein belongs to the AB hydrolase superfamily. MhpC family. In terms of assembly, homodimer.

The catalysed reaction is (2Z,4E)-2-hydroxy-6-oxonona-2,4-dienedioate + H2O = (2Z)-2-hydroxypenta-2,4-dienoate + succinate + H(+). The enzyme catalyses (2Z,4E,7E)-2-hydroxy-6-oxonona-2,4,7-trienedioate + H2O = (2Z)-2-hydroxypenta-2,4-dienoate + fumarate + H(+). It participates in aromatic compound metabolism; 3-phenylpropanoate degradation. Functionally, catalyzes the cleavage of the C5-C6 bond of 2-hydroxy-6-oxononadienedioate and 2-hydroxy-6-oxononatrienedioate, a dienol ring fission product of the bacterial meta-cleavage pathway for degradation of phenylpropionic acid. The polypeptide is 2-hydroxy-6-oxononadienedioate/2-hydroxy-6-oxononatrienedioate hydrolase (Paraburkholderia xenovorans (strain LB400)).